The sequence spans 130 residues: MNGKYYYGTGRRKSSVARVFMQKGSGQIIVNGKPVDEYFARETGRMVIRQPLALTENLESFDIKVNVVGGGETGQAGAIRHGITRALIDFDAALKSALSAAGYVTRDAREVERKKVGLRKARRAKQFSKR.

It belongs to the universal ribosomal protein uS9 family.

This chain is Small ribosomal subunit protein uS9, found in Chromobacterium violaceum (strain ATCC 12472 / DSM 30191 / JCM 1249 / CCUG 213 / NBRC 12614 / NCIMB 9131 / NCTC 9757 / MK).